The chain runs to 330 residues: MALPVYYDKDIDLGVIQSLQVGIIGYGAQGEAQALNLRDSKVKVRIGLYQGSLSVSKAKKEGFEVLGVKELVQQSDVIMALLPDELHKEVLEKEVIPFLKEGQIVGFAHGFSVHFNQVVLPKGVGAILVAPKGPGSALREEYLKNRGLYHLIAIEQESSKNNAKAVALSYAKAMGGGRMGVLKTSFKEECESDLFGEQAVLCGGLEAIVRMGFETLIKAGYPEELAYFECVHEVKLVADLLHYKGVEGLRKHISNTAEFGAIKAREPMGNLLEKRMQKILKKIQNGSFAKDFLLEKSLNYPRLNTERKALKETKIEQIGEILRAPFNHKK.

A KARI N-terminal Rossmann domain is found at Leu-3–Thr-184. NADP(+) is bound by residues Tyr-26–Gln-29, Ser-52, and Ser-54. His-109 is an active-site residue. Gly-135 lines the NADP(+) pocket. A KARI C-terminal knotted domain is found at Ser-185–Lys-329. Residues Asp-193, Glu-197, Glu-229, and Glu-233 each coordinate Mg(2+). Ser-254 serves as a coordination point for substrate.

The protein belongs to the ketol-acid reductoisomerase family. It depends on Mg(2+) as a cofactor.

The enzyme catalyses (2R)-2,3-dihydroxy-3-methylbutanoate + NADP(+) = (2S)-2-acetolactate + NADPH + H(+). The catalysed reaction is (2R,3R)-2,3-dihydroxy-3-methylpentanoate + NADP(+) = (S)-2-ethyl-2-hydroxy-3-oxobutanoate + NADPH + H(+). Its pathway is amino-acid biosynthesis; L-isoleucine biosynthesis; L-isoleucine from 2-oxobutanoate: step 2/4. It functions in the pathway amino-acid biosynthesis; L-valine biosynthesis; L-valine from pyruvate: step 2/4. Involved in the biosynthesis of branched-chain amino acids (BCAA). Catalyzes an alkyl-migration followed by a ketol-acid reduction of (S)-2-acetolactate (S2AL) to yield (R)-2,3-dihydroxy-isovalerate. In the isomerase reaction, S2AL is rearranged via a Mg-dependent methyl migration to produce 3-hydroxy-3-methyl-2-ketobutyrate (HMKB). In the reductase reaction, this 2-ketoacid undergoes a metal-dependent reduction by NADPH to yield (R)-2,3-dihydroxy-isovalerate. The chain is Ketol-acid reductoisomerase (NADP(+)) from Helicobacter pylori (strain HPAG1).